The chain runs to 331 residues: Anthranilate phosphoribosyltransferase (331 aa).

Residues Gly79, 82–83 (GD), Thr87, 89–92 (NIST), 107–115 (KHGNYGATS), and Ala119 contribute to the 5-phospho-alpha-D-ribose 1-diphosphate site. Gly79 is a binding site for anthranilate. Ser91 is a binding site for Mg(2+). Asn110 is a binding site for anthranilate. Arg165 is an anthranilate binding site. Asp223 and Glu224 together coordinate Mg(2+).

This sequence belongs to the anthranilate phosphoribosyltransferase family. As to quaternary structure, homodimer. It depends on Mg(2+) as a cofactor.

It carries out the reaction N-(5-phospho-beta-D-ribosyl)anthranilate + diphosphate = 5-phospho-alpha-D-ribose 1-diphosphate + anthranilate. It participates in amino-acid biosynthesis; L-tryptophan biosynthesis; L-tryptophan from chorismate: step 2/5. Functionally, catalyzes the transfer of the phosphoribosyl group of 5-phosphorylribose-1-pyrophosphate (PRPP) to anthranilate to yield N-(5'-phosphoribosyl)-anthranilate (PRA). This is Anthranilate phosphoribosyltransferase from Bacteroides fragilis (strain ATCC 25285 / DSM 2151 / CCUG 4856 / JCM 11019 / LMG 10263 / NCTC 9343 / Onslow / VPI 2553 / EN-2).